Reading from the N-terminus, the 725-residue chain is uncharacterized protein (725 aa).

The FtsK domain occupies 363–556; it reads GTYVEIPLYS…FVTTRPEDSC (194 aa). 382 to 389 is an ATP binding site; sequence GRTRGGKS.

It belongs to the FtsK/SpoIIIE/SftA family.

Probable DNA motor protein. May track DNA in a ATP-dependent manner by generating positive supercoils in front of it and negative supercoils behind it. This is an uncharacterized protein from Nostoc sp. (strain PCC 7120 / SAG 25.82 / UTEX 2576).